A 457-amino-acid polypeptide reads, in one-letter code: Argininosuccinate lyase (457 aa).

This sequence belongs to the lyase 1 family. Argininosuccinate lyase subfamily.

It is found in the cytoplasm. The enzyme catalyses 2-(N(omega)-L-arginino)succinate = fumarate + L-arginine. It functions in the pathway amino-acid biosynthesis; L-arginine biosynthesis; L-arginine from L-ornithine and carbamoyl phosphate: step 3/3. The protein is Argininosuccinate lyase of Pectobacterium carotovorum subsp. carotovorum (strain PC1).